Consider the following 108-residue polypeptide: Small ribosomal subunit protein uS17 (108 aa).

Belongs to the universal ribosomal protein uS17 family. In terms of assembly, part of the 30S ribosomal subunit.

One of the primary rRNA binding proteins, it binds specifically to the 5'-end of 16S ribosomal RNA. This is Small ribosomal subunit protein uS17 from Methanospirillum hungatei JF-1 (strain ATCC 27890 / DSM 864 / NBRC 100397 / JF-1).